We begin with the raw amino-acid sequence, 239 residues long: Probable transcriptional regulatory protein CD630_07950 (239 aa).

This sequence belongs to the TACO1 family.

It localises to the cytoplasm. The sequence is that of Probable transcriptional regulatory protein CD630_07950 from Clostridioides difficile (strain 630) (Peptoclostridium difficile).